Here is a 220-residue protein sequence, read N- to C-terminus: MLVIWLLLLALLPEPRVPAATASPRAPRDAGGRGGVYEHLGGAPRRRKLYCATKYHLQIHPGGKINGTLEKNSVFSILEITAVDVGIVAIKGLFSGRYLAMNKRGRLYASENYNTECEFVERIHELGYNTYASRLYRTVPSGASTKRKASAERLWYVSVNGKGRPRRGFKTRRTQKSSLFLPRVLDSKDHEMVRLFHTNVRYRESLLKPPSKNQRRRRGR.

The signal sequence occupies residues 1-19 (MLVIWLLLLALLPEPRVPA). The interval 19-40 (AATASPRAPRDAGGRGGVYEHL) is disordered. N-linked (GlcNAc...) asparagine glycosylation is present at Asn66.

Belongs to the heparin-binding growth factors family.

The protein resides in the secreted. Functionally, plays an important role in the regulation of embryonic development, cell proliferation, and cell differentiation. This Gallus gallus (Chicken) protein is Fibroblast growth factor 3 (FGF3).